The following is a 118-amino-acid chain: Large ribosomal subunit protein uL18 (118 aa).

It belongs to the universal ribosomal protein uL18 family. In terms of assembly, part of the 50S ribosomal subunit; part of the 5S rRNA/L5/L18/L25 subcomplex. Contacts the 5S and 23S rRNAs.

This is one of the proteins that bind and probably mediate the attachment of the 5S RNA into the large ribosomal subunit, where it forms part of the central protuberance. The protein is Large ribosomal subunit protein uL18 of Ligilactobacillus salivarius (strain UCC118) (Lactobacillus salivarius).